The chain runs to 187 residues: Epididymal-specific lipocalin-10 (187 aa).

An N-terminal signal peptide occupies residues 1 to 19 (MRQGLLVLALVLVLVLVLA). The cysteines at positions 90 and 163 are disulfide-linked. N-linked (GlcNAc...) asparagine glycosylation occurs at Asn-149. The residue at position 170 (Lys-170) is an N6-acetyllysine.

Belongs to the calycin superfamily. Lipocalin family.

The protein resides in the secreted. In terms of biological role, may play a role in male fertility. May act as a retinoid carrier protein within the epididymis. This Homo sapiens (Human) protein is Epididymal-specific lipocalin-10 (LCN10).